Consider the following 105-residue polypeptide: Flagellar transcriptional regulator FlhD (105 aa).

Belongs to the FlhD family. Homodimer; disulfide-linked. Forms a heterohexamer composed of two FlhC and four FlhD subunits. Each FlhC binds a FlhD dimer, forming a heterotrimer, and a hexamer assembles by dimerization of two heterotrimers.

It is found in the cytoplasm. Functions in complex with FlhC as a master transcriptional regulator that regulates transcription of several flagellar and non-flagellar operons by binding to their promoter region. Activates expression of class 2 flagellar genes, including fliA, which is a flagellum-specific sigma factor that turns on the class 3 genes. Also regulates genes whose products function in a variety of physiological pathways. This is Flagellar transcriptional regulator FlhD from Cupriavidus pinatubonensis (strain JMP 134 / LMG 1197) (Cupriavidus necator (strain JMP 134)).